A 413-amino-acid chain; its full sequence is Glutamate-1-semialdehyde 2,1-aminomutase (413 aa).

The residue at position 260 (Lys-260) is an N6-(pyridoxal phosphate)lysine.

It belongs to the class-III pyridoxal-phosphate-dependent aminotransferase family. HemL subfamily. Pyridoxal 5'-phosphate serves as cofactor.

The protein resides in the cytoplasm. It catalyses the reaction (S)-4-amino-5-oxopentanoate = 5-aminolevulinate. Its pathway is porphyrin-containing compound metabolism; protoporphyrin-IX biosynthesis; 5-aminolevulinate from L-glutamyl-tRNA(Glu): step 2/2. The polypeptide is Glutamate-1-semialdehyde 2,1-aminomutase (Methanoregula boonei (strain DSM 21154 / JCM 14090 / 6A8)).